The primary structure comprises 308 residues: D-alanine--D-alanine ligase (308 aa).

The 201-residue stretch at 102–302 (KTVAKSAGIP…FGALLSWMVE (201 aa)) folds into the ATP-grasp domain. Residue 128–183 (PMEPPYVVKPVAEGSSFGVVIVREGQSHPPQVLGSAEWGYGERVMVERYIPGRELT) coordinates ATP. D252, E269, and N271 together coordinate Mg(2+).

The protein belongs to the D-alanine--D-alanine ligase family. It depends on Mg(2+) as a cofactor. Mn(2+) serves as cofactor.

The protein resides in the cytoplasm. It catalyses the reaction 2 D-alanine + ATP = D-alanyl-D-alanine + ADP + phosphate + H(+). It participates in cell wall biogenesis; peptidoglycan biosynthesis. In terms of biological role, cell wall formation. This Chelativorans sp. (strain BNC1) protein is D-alanine--D-alanine ligase.